The sequence spans 276 residues: 28 kDa ribonucleoprotein, chloroplastic (276 aa).

The N-terminal 57 residues, 1-57 (MATNGCLISLPPFFTTTKSISSYPFLSTQLKPISLSSSLPTLLSLNKRTTQFPTFVS), are a transit peptide targeting the chloroplast. RRM domains follow at residues 97-175 (AKLF…KAAP) and 191-269 (YRIY…AAEE).

The protein localises to the plastid. It is found in the chloroplast. Probably involved in the 3'-end processing of chloroplast mRNA's. The sequence is that of 28 kDa ribonucleoprotein, chloroplastic from Nicotiana sylvestris (Wood tobacco).